The sequence spans 239 residues: MVAFFSPLREPLSLFRISTSPRSFRKVPHLLLLRQTSPCSSQSFSIIFISLSSSNSREGIVFTLSFLIFESNTLLFSSRKSFTLSAFPSGRTVKYTLALLPSLLSSTLVMLTTPKSVGAFSTTKLAIISFICSPSLSFFLLILYLLQHIFVLFKLFAVEYVRYELVYFLFLEYRTRQQSSRVLVVLYLPEHEKFRKSVLNLSVSVTILAVLQGILFYEKVIFTEFYDVEYSPPSSSYEF.

3 helical membrane-spanning segments follow: residues 125–144 (LAII…LILY), 149–171 (IFVL…FLFL), and 197–216 (SVLN…GILF).

It localises to the cell membrane. This is an uncharacterized protein from Aquifex aeolicus (strain VF5).